A 414-amino-acid polypeptide reads, in one-letter code: Putative gustatory receptor 47b (414 aa).

At 1–5 (MQRDD) the chain is on the cytoplasmic side. The helical transmembrane segment at 6 to 26 (GFVYCYGNLYSLLLYWGLVTI) threads the bilayer. Over 27 to 40 (RVRSPDRGGAFSNR) the chain is Extracellular. The helical transmembrane segment at 41–61 (WTVCYALFTRSFMVICFMATV) threads the bilayer. Residues 62–142 (MTKLRDPEMS…QWNYRRARLK (81 aa)) are Cytoplasmic-facing. Residues 143–163 (YWYGTVIVGFCFFSFSISLIF) form a helical membrane-spanning segment. Residues 164–182 (DTTRCTCGIPSTLLMAFTY) lie on the Extracellular side of the membrane. A helical membrane pass occupies residues 183 to 203 (TLLTSSVGLLGFVHIGIMDFI). Residues 204 to 249 (RVRLRLVQQLLHQLYQADDSSEVHERIAYLFEMSKRCSFLLAELNG) are Cytoplasmic-facing. A helical transmembrane segment spans residues 250-270 (VFGFAAAAGIFYDFTIMTCFV). Residues 271-291 (YVICQKLLEREPWDPEYVYML) lie on the Extracellular side of the membrane. Residues 292-312 (LHVAIHTYKVVITSTYGYLLL) form a helical membrane-spanning segment. Topologically, residues 313–364 (REKRNCMHLLSQYSRYFSGQDVARRKTEDFQHWRMHNRQAAMVGSTTLLSVS) are cytoplasmic. A helical membrane pass occupies residues 365–385 (TIYLVYNGMANYVIILVQLLF). At 386 to 414 (QQQQIKDHQLTSGKDVDIVGPMGPITHMD) the chain is on the extracellular side.

It belongs to the insect chemoreceptor superfamily. Gustatory receptor (GR) family. Gr57a subfamily. As to expression, expressed in neurons of the terminal external chemosensory organ of larvae.

It localises to the cell membrane. Its function is as follows. Probable gustatory receptor which mediates acceptance or avoidance behavior, depending on its substrates. This is Putative gustatory receptor 47b (Gr47b) from Drosophila melanogaster (Fruit fly).